Consider the following 1286-residue polypeptide: DNA-directed RNA polymerase subunit beta' (1286 aa).

Cys58, Cys60, Cys73, and Cys76 together coordinate Zn(2+). 3 residues coordinate Mg(2+): Asp533, Asp535, and Asp537. Zn(2+) is bound by residues Cys867, Cys944, Cys951, and Cys954.

Belongs to the RNA polymerase beta' chain family. As to quaternary structure, the RNAP catalytic core consists of 2 alpha, 1 beta, 1 beta' and 1 omega subunit. When a sigma factor is associated with the core the holoenzyme is formed, which can initiate transcription. The cofactor is Mg(2+). Zn(2+) is required as a cofactor.

The catalysed reaction is RNA(n) + a ribonucleoside 5'-triphosphate = RNA(n+1) + diphosphate. Its function is as follows. DNA-dependent RNA polymerase catalyzes the transcription of DNA into RNA using the four ribonucleoside triphosphates as substrates. This is DNA-directed RNA polymerase subunit beta' from Tropheryma whipplei (strain TW08/27) (Whipple's bacillus).